The primary structure comprises 484 residues: Neuronal acetylcholine receptor subunit alpha-9 (484 aa).

Residues 1 to 27 (MKRNNLSSFYVSLWLLFTATMLQAVES) form the signal peptide. The Extracellular portion of the chain corresponds to 28–240 (AKGKYAQMLF…FTLILKRKSS (213 aa)). N59 is a glycosylation site (N-linked (GlcNAc...) asparagine). A disulfide bond links C157 and C171. N172 carries N-linked (GlcNAc...) asparagine glycosylation. Positions 193 and 195 each coordinate Na(+). C221 and C222 form a disulfide bridge. The next 3 membrane-spanning stretches (helical) occupy residues 241–261 (FYIFNLLLPCILISFLAPLGF), 271–291 (VSLGVTVLLALTVFQLMVAEI), and 305–325 (YIATMTMITASTALTIIIMNV). Residues 326–462 (HHCGSEAKPV…WKKVAKVMDR (137 aa)) are Cytoplasmic-facing. The tract at residues 364–395 (RREKEQEHRLEGGDMCRGGDGKSHLSSRNDDS) is disordered. A helical membrane pass occupies residues 463-483 (FFMWIFFIMVFFMSVLIIGKA).

It belongs to the ligand-gated ion channel (TC 1.A.9) family. Acetylcholine receptor (TC 1.A.9.1) subfamily. Alpha-9/CHRNA9 sub-subfamily. As to quaternary structure, forms homo- or heteropentameric channels in conjunction with CHRNA10. The native outer hair cell receptor is composed of CHRNA9:CHRNA10 heterooligomers. Found in the stoichiometric form (CHRNA9)2:(CHRNA10)3. Expressed in hair cells of the cochlea (at protein level). Expressed in hair cells of the cochlea.

The protein resides in the synaptic cell membrane. It localises to the cell membrane. It carries out the reaction Ca(2+)(in) = Ca(2+)(out). It catalyses the reaction K(+)(in) = K(+)(out). The catalysed reaction is Na(+)(in) = Na(+)(out). The enzyme catalyses Mg(2+)(in) = Mg(2+)(out). Its activity is regulated as follows. Activated by a myriad of ligands such as acetylcholine. AChR activity is inhibited by the antagonist alpha-conotoxins RgIA and GeXXA, small disulfide-constrained peptides from cone snails. Component of neuronal acetylcholine receptors (nAChRs) that function as pentameric, ligand-gated cation channels with high calcium permeability among other activities. nAChRs are excitatory neurotrasnmitter receptors formed by a collection of nAChR subunits known to mediate synaptic transmission in the nervous system and the neuromuscular junction. Each nAchR subunit confers differential attributes to channel properties, including activation, deactivation and desensitization kinetics, pH sensitivity, cation permeability, and binding to allosteric modulators. Forms either homopentamers or heteropentamers with CHRNA10. Expressed in the inner ear, in sympathetic neurons and in other non-neuronal cells, such as skin keratinocytes and lymphocytes. The channel is permeable to a range of divalent cations including calcium, the influx of which may activate a potassium current which hyperpolarizes the cell membrane. In Gallus gallus (Chicken), this protein is Neuronal acetylcholine receptor subunit alpha-9 (CHRNA9).